The following is a 797-amino-acid chain: G-type lectin S-receptor-like serine/threonine-protein kinase SD2-2 (797 aa).

A signal peptide spans Met1–Ser23. In terms of domain architecture, Bulb-type lectin spans Lys24 to Asp139. Residues Lys24–Ser401 are Extracellular-facing. Residues Asn30, Asn49, Asn150, and Asn197 are each glycosylated (N-linked (GlcNAc...) asparagine). Positions Pro274–Ala310 constitute an EGF-like; atypical domain. 4 cysteine pairs are disulfide-bonded: Cys278–Cys290, Cys284–Cys298, Cys359–Cys381, and Cys363–Cys369. One can recognise a PAN domain in the interval Cys321–Ser407. N-linked (GlcNAc...) asparagine glycans are attached at residues Asn366 and Asn397. Residues Ile402–Pro422 traverse the membrane as a helical segment. Residues Leu423–Pro797 lie on the Cytoplasmic side of the membrane. One can recognise a Protein kinase domain in the interval Asn461–Val742. Residues Val467–Val475 and Lys490 contribute to the ATP site. A caM-binding region spans residues Ser550 to Thr566. Asp585 acts as the Proton acceptor in catalysis. Residues Gly767–Pro797 are disordered. A compositionally biased stretch (low complexity) spans Ser784–Pro797.

Belongs to the protein kinase superfamily. Ser/Thr protein kinase family. Autophosphorylated. As to expression, expressed in the shoot apex and roots, specifically in lateral roots and at the root-hypocotyl transition zone.

The protein localises to the cell membrane. It catalyses the reaction L-seryl-[protein] + ATP = O-phospho-L-seryl-[protein] + ADP + H(+). The catalysed reaction is L-threonyl-[protein] + ATP = O-phospho-L-threonyl-[protein] + ADP + H(+). Its function is as follows. Serine/threonine-protein kinase. The sequence is that of G-type lectin S-receptor-like serine/threonine-protein kinase SD2-2 (SD22) from Arabidopsis thaliana (Mouse-ear cress).